The sequence spans 164 residues: MRLTSKGRYAVTAMLDVALHSQDGPVPLADISERQGISLSYLEQLFSRLRKNGLVASVRGPGGGYLLGKDASAIAVGAVITAVDESVDATRCQGKEGCQGGNRCLTHTLWRDLSERISSFLNNITLAELVNNQDILEVADRQNNDTRRTANGRPQETINVNLRA.

The HTH rrf2-type domain maps to 2–131 (RLTSKGRYAV…NNITLAELVN (130 aa)). Positions 28–51 (LADISERQGISLSYLEQLFSRLRK) form a DNA-binding region, H-T-H motif. Residues cysteine 92, cysteine 98, and cysteine 104 each contribute to the [2Fe-2S] cluster site. Residues 143 to 164 (NNDTRRTANGRPQETINVNLRA) form a disordered region. The segment covering 152-164 (GRPQETINVNLRA) has biased composition (polar residues).

It depends on [2Fe-2S] cluster as a cofactor.

Regulates the transcription of several operons and genes involved in the biogenesis of Fe-S clusters and Fe-S-containing proteins. This Yersinia pseudotuberculosis serotype O:1b (strain IP 31758) protein is HTH-type transcriptional regulator IscR.